The primary structure comprises 537 residues: Quadr-hydrophobin (537 aa).

The N-terminal stretch at 1 to 17 is a signal peptide; the sequence is MKFITVAAALFASTSLA. Hydrophobin stretches follow at residues 63 to 199, 200 to 299, 300 to 421, and 422 to 537; these read GGNP…QNPI, GGNP…ENPT, GGNP…QDPL, and GGNP…RAII. N-linked (GlcNAc...) asparagine glycosylation is found at Asn-70 and Asn-113. Disulfide bonds link Cys-134–Cys-183, Cys-144–Cys-174, Cys-145–Cys-157, Cys-184–Cys-195, Cys-234–Cys-283, Cys-244–Cys-274, Cys-245–Cys-257, Cys-284–Cys-295, Cys-356–Cys-405, Cys-366–Cys-396, Cys-367–Cys-379, Cys-406–Cys-417, Cys-471–Cys-520, Cys-481–Cys-511, Cys-482–Cys-494, and Cys-521–Cys-532.

The protein belongs to the cerato-ulmin hydrophobin family. As to quaternary structure, homotetramer. Further self-assembles to form highly ordered films at water-air interfaces through intermolecular interactions.

It is found in the secreted. Its subcellular location is the cell wall. Aerial growth, conidiation, and dispersal of filamentous fungi in the environment rely upon a capability of their secreting small amphipathic proteins called hydrophobins (HPBs) with low sequence identity. Class I can self-assemble into an outermost layer of rodlet bundles on aerial cell surfaces, conferring cellular hydrophobicity that supports fungal growth, development and dispersal; whereas Class II form highly ordered films at water-air interfaces through intermolecular interactions but contribute nothing to the rodlet structure. In Cordyceps militaris (Caterpillar fungus), this protein is Quadr-hydrophobin.